Here is a 320-residue protein sequence, read N- to C-terminus: Phosphate acyltransferase (320 aa).

Belongs to the PlsX family. As to quaternary structure, homodimer. Probably interacts with PlsY.

It is found in the cytoplasm. The enzyme catalyses a fatty acyl-[ACP] + phosphate = an acyl phosphate + holo-[ACP]. Its pathway is lipid metabolism; phospholipid metabolism. In terms of biological role, catalyzes the reversible formation of acyl-phosphate (acyl-PO(4)) from acyl-[acyl-carrier-protein] (acyl-ACP). This enzyme utilizes acyl-ACP as fatty acyl donor, but not acyl-CoA. This chain is Phosphate acyltransferase, found in Chlamydia pneumoniae (Chlamydophila pneumoniae).